Reading from the N-terminus, the 149-residue chain is Large ribosomal subunit protein uL15 (149 aa).

The span at 1-28 (MVIKIHDLRPAPGSKRDKIRVGRGEGSK) shows a compositional bias: basic and acidic residues. The interval 1 to 54 (MVIKIHDLRPAPGSKRDKIRVGRGEGSKGKTAGRGTKGTKARKNVSPRFEGGQM) is disordered.

It belongs to the universal ribosomal protein uL15 family. In terms of assembly, part of the 50S ribosomal subunit.

In terms of biological role, binds to the 23S rRNA. The chain is Large ribosomal subunit protein uL15 from Saccharopolyspora erythraea (strain ATCC 11635 / DSM 40517 / JCM 4748 / NBRC 13426 / NCIMB 8594 / NRRL 2338).